The primary structure comprises 335 residues: Legumin type B (335 aa).

2 disordered regions span residues 47-87 (PETQ…GNSV) and 102-155 (TEED…GRNG). The span at 105 to 118 (DTAKRLRSPRDKRN) shows a compositional bias: basic and acidic residues. The span at 135-144 (QQEEEEQEEE) shows a compositional bias: acidic residues. The Cupin type-1 domain occupies 167–314 (ENIAQPARAD…AFGLRQRQVT (148 aa)).

Belongs to the 11S seed storage protein (globulins) family. Hexamer; each subunit is composed of an acidic and a basic chain derived from a single precursor and linked by a disulfide bond.

Functionally, this protein found in the seeds of many leguminous and non-leguminous plants is the source of sulfur-containing amino acids in seed meals. The polypeptide is Legumin type B (LEB7) (Vicia faba (Broad bean)).